Reading from the N-terminus, the 739-residue chain is Polyribonucleotide nucleotidyltransferase (739 aa).

Mg(2+) contacts are provided by D488 and D494. Residues 555–614 (PKIVTLKINPDKIRDVIGPGGKVINGIIDETGVKIDIDQDGTVFIASTDQDGINHARQLI) form the KH domain. The S1 motif domain maps to 624–692 (GEEFDGTVRR…DKGRVNASHK (69 aa)). The disordered stretch occupies residues 698–739 (GMSPEDRAAYDEKKKTERDSRPPRRDTGSRPPRDGQRPPRRN). The segment covering 701–739 (PEDRAAYDEKKKTERDSRPPRRDTGSRPPRDGQRPPRRN) has biased composition (basic and acidic residues).

Belongs to the polyribonucleotide nucleotidyltransferase family. Mg(2+) is required as a cofactor.

It is found in the cytoplasm. The enzyme catalyses RNA(n+1) + phosphate = RNA(n) + a ribonucleoside 5'-diphosphate. Its function is as follows. Involved in mRNA degradation. Catalyzes the phosphorolysis of single-stranded polyribonucleotides processively in the 3'- to 5'-direction. The sequence is that of Polyribonucleotide nucleotidyltransferase from Exiguobacterium sibiricum (strain DSM 17290 / CCUG 55495 / CIP 109462 / JCM 13490 / 255-15).